A 988-amino-acid chain; its full sequence is UvrABC system protein A (988 aa).

Residue 33–40 (GLSGSGKS) coordinates ATP. The segment at 255-282 (CPVCDYSLPELEPRLFSFNAPVGACPSC) adopts a C4-type zinc-finger fold. ABC transporter domains lie at 312–589 (WDRR…PRSL) and 609–938 (PNPK…QFLA). 642–649 (GVSGSGKS) is a binding site for ATP. The segment at 741-767 (CEACQGDGMIKVEMHFLPDVYVPCDVC) adopts a C4-type zinc-finger fold. The interval 948–988 (ETRPAAMANKPDARPPRKVKPEKVAKATKTATKKTAKKKAS) is disordered. The span at 958-972 (PDARPPRKVKPEKVA) shows a compositional bias: basic and acidic residues. The segment covering 978–988 (ATKKTAKKKAS) has biased composition (basic residues).

Belongs to the ABC transporter superfamily. UvrA family. As to quaternary structure, forms a heterotetramer with UvrB during the search for lesions.

It localises to the cytoplasm. The UvrABC repair system catalyzes the recognition and processing of DNA lesions. UvrA is an ATPase and a DNA-binding protein. A damage recognition complex composed of 2 UvrA and 2 UvrB subunits scans DNA for abnormalities. When the presence of a lesion has been verified by UvrB, the UvrA molecules dissociate. The protein is UvrABC system protein A of Xanthomonas campestris pv. campestris (strain ATCC 33913 / DSM 3586 / NCPPB 528 / LMG 568 / P 25).